We begin with the raw amino-acid sequence, 74 residues long: MSNPCQKEACAIQGYCLLSHQYDDAKCAKVIDQLYICCSKFYKDNGKDSRSPCCPLPSLLELKMKQRKLTPGDS.

The CHCH domain occupies 2–45 (SNPCQKEACAIQGYCLLSHQYDDAKCAKVIDQLYICCSKFYKDN). Residues 5–16 (CQKEACAIQGYC) carry the Cx10C motif motif. 2 cysteine pairs are disulfide-bonded: cysteine 5-cysteine 37 and cysteine 16-cysteine 27. The short motif at 27 to 37 (CAKVIDQLYIC) is the Cx9C motif element.

It belongs to the CMC4 family.

The protein localises to the mitochondrion intermembrane space. In Saccharomyces cerevisiae (strain JAY291) (Baker's yeast), this protein is Cx9C motif-containing protein 4, mitochondrial (CMC4).